We begin with the raw amino-acid sequence, 342 residues long: Galactose mutarotase (342 aa).

Ala-2 carries the N-acetylalanine modification. A Phosphoserine modification is found at Ser-14. Beta-D-galactose contacts are provided by residues 81-82 (NR) and His-107. Ser-124 bears the Phosphoserine mark. Residue His-176 is the Proton donor of the active site. Beta-D-galactose-binding positions include 176 to 178 (HSY), Asp-243, Gln-279, and Glu-307. Glu-307 serves as the catalytic Proton acceptor.

This sequence belongs to the aldose epimerase family. In terms of assembly, monomer.

It is found in the cytoplasm. The catalysed reaction is alpha-D-galactose = beta-D-galactose. It carries out the reaction alpha-D-glucose = beta-D-glucose. The protein operates within carbohydrate metabolism; hexose metabolism. It participates in carbohydrate metabolism; galactose metabolism. Its function is as follows. Mutarotase that catalyzes the interconversion of beta-D-galactose and alpha-D-galactose during galactose metabolism. Beta-D-galactose is metabolized in the liver into glucose 1-phosphate, the primary metabolic fuel, by the action of four enzymes that constitute the Leloir pathway: GALM, GALK1 (galactokinase), GALT (galactose-1-phosphate uridylyltransferase) and GALE (UDP-galactose-4'-epimerase). Involved in the maintenance of the equilibrium between the beta- and alpha-anomers of galactose, therefore ensuring a sufficient supply of the alpha-anomer for GALK1. Also active on D-glucose although shows a preference for galactose over glucose. In Homo sapiens (Human), this protein is Galactose mutarotase.